The sequence spans 289 residues: MRTLQGWLLPVFMLPMAVYAQEATVKEVHDAPAVRGSIIANMLQEHDNPFTLYPYDTNYLIYTQTSDLNKEAIASYDWAENARKDEVKFQLSLAFPLWRGILGPNSVLGASYTQKSWWQLSNSEESSPFRETNYEPQLFLGFATDYRFAGWTLRDVEMGYNHDSNGRSDPTSRSWNRLYTRLMAENGNWLVEVKPWYVVGNTDDNPDITKYMGYYQLKIGYHLGDAVLSAKGQYNWNTGYGGAELGLSYPITKHVRLYTQVYSGYGESLIDYNFNQTRVGVGVMLNDLF.

A signal peptide spans 1–20 (MRTLQGWLLPVFMLPMAVYA). At 21–52 (QEATVKEVHDAPAVRGSIIANMLQEHDNPFTL) the chain is on the periplasmic side. The chain crosses the membrane as a beta stranded span at residues 53-65 (YPYDTNYLIYTQT). At 66-84 (SDLNKEAIASYDWAENARK) the chain is on the extracellular side. The chain crosses the membrane as a beta stranded span at residues 85–99 (DEVKFQLSLAFPLWR). The Periplasmic segment spans residues 100-105 (GILGPN). The beta stranded transmembrane segment at 106–118 (SVLGASYTQKSWW) threads the bilayer. The Extracellular portion of the chain corresponds to 119–128 (QLSNSEESSP). S126 serves as a coordination point for Ca(2+). The beta stranded transmembrane segment at 129–148 (FRETNYEPQLFLGFATDYRF) threads the bilayer. Topologically, residues 149 to 150 (AG) are periplasmic. A beta stranded transmembrane segment spans residues 151-164 (WTLRDVEMGYNHDS). H162 functions as the Proton acceptor in the catalytic mechanism. S164 (nucleophile) is an active-site residue. The Extracellular segment spans residues 165–173 (NGRSDPTSR). Residues R167 and S172 each contribute to the Ca(2+) site. A beta stranded transmembrane segment spans residues 174–186 (SWNRLYTRLMAEN). At 187-188 (GN) the chain is on the periplasmic side. A beta stranded membrane pass occupies residues 189–198 (WLVEVKPWYV). The Extracellular segment spans residues 199–216 (VGNTDDNPDITKYMGYYQ). Residue D204 participates in Ca(2+) binding. Residues 217–223 (LKIGYHL) form a beta stranded membrane-spanning segment. Over 224–225 (GD) the chain is Periplasmic. Residues 226–234 (AVLSAKGQY) form a beta stranded membrane-spanning segment. Topologically, residues 235–241 (NWNTGYG) are extracellular. A beta stranded membrane pass occupies residues 242 to 250 (GAELGLSYP). Over 251–255 (ITKHV) the chain is Periplasmic. The beta stranded transmembrane segment at 256–265 (RLYTQVYSGY) threads the bilayer. The Extracellular portion of the chain corresponds to 266 to 274 (GESLIDYNF). The chain crosses the membrane as a beta stranded span at residues 275-286 (NQTRVGVGVMLN). Topologically, residues 287–289 (DLF) are periplasmic.

Belongs to the phospholipase A1 family. In terms of assembly, homodimer; dimerization is reversible, and the dimeric form is the active one. Requires Ca(2+) as cofactor.

Its subcellular location is the cell outer membrane. The catalysed reaction is a 1,2-diacyl-sn-glycero-3-phosphocholine + H2O = a 2-acyl-sn-glycero-3-phosphocholine + a fatty acid + H(+). The enzyme catalyses a 1,2-diacyl-sn-glycero-3-phosphocholine + H2O = a 1-acyl-sn-glycero-3-phosphocholine + a fatty acid + H(+). Hydrolysis of phosphatidylcholine with phospholipase A2 (EC 3.1.1.4) and phospholipase A1 (EC 3.1.1.32) activities. This is Phospholipase A1 (pldA) from Escherichia coli O157:H7.